The primary structure comprises 549 residues: Zinc finger protein 266 (549 aa).

Residues 1–42 enclose the KRAB domain; it reads MLENYKNLATVGYQLFKPSLISWLEQEESRTVQRGDFQASEW. A C2H2-type 1; degenerate zinc finger spans residues 156-178; sequence FDCSDSGKSFINHSHLQGHLRTH. The C2H2-type 2; degenerate zinc finger occupies 184-206; that stretch reads HEWKECGRGFIHSTDLAVRIQTH. 12 C2H2-type zinc fingers span residues 212-234, 240-262, 268-290, 296-318, 324-346, 352-374, 380-402, 408-430, 436-458, 464-486, 492-514, and 520-542; these read YKCKECGKGFRYSAYLNIHMGTH, YECKECGKAFTRSCQLTQHRKTH, YKCKDCGRAFTVSSCLSQHMKIH, YECKECGIAFTRSSQLTEHLKTH, FECKICGKSFRNSSCLSDHFRIH, YKCKDCGKAFTQNSDLTKHARTH, YECKECGKAFARSSRLSEHTRTH, FECVKCGKAFAISSNLSGHLRIH, FECLECGKAFTHSSSLNNHMRTH, FTCMECGKAFKFPTCVNLHMRIH, YKCKQCGKSFSYSNSFQLHERTH, and YECKECGKAFSSSSSFRNHERRH. The disordered stretch occupies residues 530–549; it reads SSSSSFRNHERRHADERLSA.

This sequence belongs to the krueppel C2H2-type zinc-finger protein family.

It is found in the nucleus. Its function is as follows. May be involved in transcriptional regulation. The polypeptide is Zinc finger protein 266 (ZNF266) (Homo sapiens (Human)).